The chain runs to 156 residues: Small ribosomal subunit protein uS7c (156 aa).

It belongs to the universal ribosomal protein uS7 family. In terms of assembly, part of the 30S ribosomal subunit.

The protein localises to the plastid. It is found in the chloroplast. In terms of biological role, one of the primary rRNA binding proteins, it binds directly to 16S rRNA where it nucleates assembly of the head domain of the 30S subunit. The sequence is that of Small ribosomal subunit protein uS7c (rps7) from Pisum sativum (Garden pea).